A 311-amino-acid chain; its full sequence is Pyrimidine-specific ribonucleoside hydrolase RihA (311 aa).

The active site involves His-240.

The protein belongs to the IUNH family. RihA subfamily.

Functionally, hydrolyzes with equal efficiency cytidine or uridine to ribose and cytosine or uracil, respectively. The polypeptide is Pyrimidine-specific ribonucleoside hydrolase RihA (Escherichia coli O127:H6 (strain E2348/69 / EPEC)).